The chain runs to 326 residues: Phospho-N-acetylmuramoyl-pentapeptide-transferase (326 aa).

Transmembrane regions (helical) follow at residues I13 to P33, G57 to M77, E85 to L105, M121 to T141, N155 to V175, I181 to F201, V208 to F228, I232 to M252, L257 to V277, and V305 to A325.

The protein belongs to the glycosyltransferase 4 family. MraY subfamily. The cofactor is Mg(2+).

The protein localises to the cell membrane. It catalyses the reaction UDP-N-acetyl-alpha-D-muramoyl-L-alanyl-gamma-D-glutamyl-meso-2,6-diaminopimeloyl-D-alanyl-D-alanine + di-trans,octa-cis-undecaprenyl phosphate = di-trans,octa-cis-undecaprenyl diphospho-N-acetyl-alpha-D-muramoyl-L-alanyl-D-glutamyl-meso-2,6-diaminopimeloyl-D-alanyl-D-alanine + UMP. The protein operates within cell wall biogenesis; peptidoglycan biosynthesis. Catalyzes the initial step of the lipid cycle reactions in the biosynthesis of the cell wall peptidoglycan: transfers peptidoglycan precursor phospho-MurNAc-pentapeptide from UDP-MurNAc-pentapeptide onto the lipid carrier undecaprenyl phosphate, yielding undecaprenyl-pyrophosphoryl-MurNAc-pentapeptide, known as lipid I. In Clostridium beijerinckii (strain ATCC 51743 / NCIMB 8052) (Clostridium acetobutylicum), this protein is Phospho-N-acetylmuramoyl-pentapeptide-transferase.